The chain runs to 240 residues: Urease accessory protein UreF (240 aa).

This sequence belongs to the UreF family. UreD, UreF and UreG form a complex that acts as a GTP-hydrolysis-dependent molecular chaperone, activating the urease apoprotein by helping to assemble the nickel containing metallocenter of UreC. The UreE protein probably delivers the nickel.

The protein localises to the cytoplasm. Its function is as follows. Required for maturation of urease via the functional incorporation of the urease nickel metallocenter. This chain is Urease accessory protein UreF, found in Bradyrhizobium sp. (strain BTAi1 / ATCC BAA-1182).